The chain runs to 462 residues: uncharacterized protein (462 aa).

Residues Met-1–Asp-108 form a disordered region. Residues Thr-36–Lys-51 are compositionally biased toward basic and acidic residues. A compositionally biased stretch (low complexity) spans Ser-64–Asn-95. The stretch at Leu-119–Ser-150 forms a coiled coil. The interval Ser-188 to Asp-208 is disordered. The segment covering Leu-190–Asp-208 has biased composition (low complexity).

This is an uncharacterized protein from Dictyostelium discoideum (Social amoeba).